A 501-amino-acid chain; its full sequence is ATP synthase subunit alpha (501 aa).

G169–T176 serves as a coordination point for ATP.

This sequence belongs to the ATPase alpha/beta chains family. F-type ATPases have 2 components, CF(1) - the catalytic core - and CF(0) - the membrane proton channel. CF(1) has five subunits: alpha(3), beta(3), gamma(1), delta(1), epsilon(1). CF(0) has three main subunits: a(1), b(2) and c(9-12). The alpha and beta chains form an alternating ring which encloses part of the gamma chain. CF(1) is attached to CF(0) by a central stalk formed by the gamma and epsilon chains, while a peripheral stalk is formed by the delta and b chains.

Its subcellular location is the cell inner membrane. It catalyses the reaction ATP + H2O + 4 H(+)(in) = ADP + phosphate + 5 H(+)(out). In terms of biological role, produces ATP from ADP in the presence of a proton gradient across the membrane. The alpha chain is a regulatory subunit. The polypeptide is ATP synthase subunit alpha (Campylobacter jejuni subsp. doylei (strain ATCC BAA-1458 / RM4099 / 269.97)).